The chain runs to 448 residues: Rhodopsin (448 aa).

Residues 2–33 (GRDLRDNETWWYNPSIVVHPHWREFDQVPDAV) lie on the Extracellular side of the membrane. The N-linked (GlcNAc...) asparagine glycan is linked to Asn-8. A helical membrane pass occupies residues 34-58 (YYSLGIFIGICGIIGCGGNGIVIYL). Residues 59 to 70 (FTKTKSLQTPAN) are Cytoplasmic-facing. A helical transmembrane segment spans residues 71–97 (MFIINLAFSDFTFSLVNGFPLMTISCF). The Extracellular portion of the chain corresponds to 98-109 (LKKWIFGFAACK). Cys-108 and Cys-186 form a disulfide bridge. The helical transmembrane segment at 110 to 131 (VYGFIGGIFGFMSIMTMAMISI) threads the bilayer. The Cytoplasmic segment spans residues 132-151 (DRYNVIGRPMAASKKMSHRR). A helical transmembrane segment spans residues 152–172 (AFIMIIFVWLWSVLWAIGPIF). Over 173-199 (GWGAYTLEGVLCNCSFDYISRDSTTRS) the chain is Extracellular. Residues 200–224 (NILCMFILGFFGPILIIFFCYFNIV) form a helical membrane-spanning segment. The Cytoplasmic portion of the chain corresponds to 225–261 (MSVSNHEKEMAAMAKRLNAKELRKAQAGANAEMRLAK). Residues 262-283 (ISIVIVSQFLLSWSPYAVVALL) traverse the membrane as a helical segment. At 284 to 293 (AQFGPLEWVT) the chain is on the extracellular side. Residues 294-315 (PYAAQLPVMFAKASAIHNPMIY) form a helical membrane-spanning segment. Lys-305 bears the N6-(retinylidene)lysine mark. Topologically, residues 316–448 (SVSHPKFREA…QGVDNQAYQA (133 aa)) are cytoplasmic. Residues Cys-336 and Cys-337 are each lipidated (S-palmitoyl cysteine). Acidic residues predominate over residues 343 to 352 (ETEDDKDAET). A disordered region spans residues 343 to 448 (ETEDDKDAET…QGVDNQAYQA (106 aa)). A compositionally biased stretch (low complexity) spans 359-391 (SSDAAPSADAAQMKEMMAMMQKMQQQQAAYPPQ). Over residues 392 to 437 (GYAPPPQGYPPQGYPPQGYPPQGYPPQGYPPPPQGAPPQGAPPAAP) the composition is skewed to pro residues.

This sequence belongs to the G-protein coupled receptor 1 family. Opsin subfamily. In terms of processing, contains one covalently linked retinal chromophore. Upon light absorption, the covalently bound 11-cis-retinal is converted to all-trans-retinal. After hydrolysis of the Schiff base and release of the covalently bound all-trans-retinal, active rhodopsin is regenerated by binding of a fresh molecule of 11-cis-retinal. Retina, rhabdomere membrane of photoreceptor cells (at protein level).

It is found in the cell projection. It localises to the rhabdomere membrane. Functionally, photoreceptor required for image-forming vision at low light intensity. Light-induced isomerization of 11-cis to all-trans retinal triggers a conformational change that activates signaling via G-proteins. Signaling mediates the activation of phospholipase C. Subsequent receptor phosphorylation mediates displacement of the bound G-protein alpha subunit by arrestin and terminates signaling. This is Rhodopsin (RHO) from Todarodes pacificus (Japanese flying squid).